Here is a 1207-residue protein sequence, read N- to C-terminus: Histidine kinase 1 (1207 aa).

The segment covering 1–10 has biased composition (polar residues); sequence MRGDSFSMSI. The interval 1–20 is disordered; it reads MRGDSFSMSIENLPDSPMGS. At 1–81 the chain is on the cytoplasmic side; sequence MRGDSFSMSI…SSYYSVFVVR (81 aa). A helical transmembrane segment spans residues 82 to 102; sequence LAIMVMLAILIGLLTVLTWHF. Over 103 to 446 the chain is Extracellular; it reads TRIYTKQSLQ…GKVDERAFKT (344 aa). A helical transmembrane segment spans residues 447-467; the sequence is LIILISASVCIFFIGCVCILI. The Cytoplasmic portion of the chain corresponds to 468–1207; that stretch reads LTNGVSKEMK…PSAFQTSLSA (740 aa). A Histidine kinase domain is found at 505 to 763; that stretch reads NMSHELRTPM…LMRLYLILST (259 aa). His-508 bears the Phosphohistidine; by autocatalysis mark. Disordered stretches follow at residues 964-987 and 1000-1021; these read DTCS…VKPS and DATT…PEEE. The segment covering 975-984 has biased composition (basic and acidic residues); the sequence is SGEKQVDKSV. The span at 1000 to 1014 shows a compositional bias: low complexity; it reads DATTSNDDSTSASMT. A Response regulatory domain is found at 1045-1196; that stretch reads RILLAEDTPV…LMVSTILSLT (152 aa). Asp-1127 is subject to 4-aspartylphosphate.

Interacts with AHP2, depending of the phosphorylation state of Asp-1075 in the receiver domain, but probably not with AHP1 and AHP3. Autophosphorylated predominantly on His residues. Activation probably requires a transfer of a phosphate group between a His in the transmitter domain and an Asp of the receiver domain. Mostly expressed in roots, and, to a lower extent, in stems, leaves and flowers.

Its subcellular location is the cell membrane. The enzyme catalyses ATP + protein L-histidine = ADP + protein N-phospho-L-histidine.. In terms of biological role, functions as an osmosensor histidine kinase that detects water stress and transmits the stress signal to a downstream MAPK cascade. This protein undergoes an ATP-dependent autophosphorylation at a conserved histidine residue in the kinase core, and a phosphoryl group is then transferred to a conserved aspartate residue in the receiver domain. Positive regulator of drought and salt stress responses, and abscisic acid (ABA) signaling. Confers drought tolerance, probably by regulating levels of ABA accumulation. Plays a redundant role in regulating plant growth and development. Required for the regulation of desiccation processes during seed formation. The chain is Histidine kinase 1 (AHK1) from Arabidopsis thaliana (Mouse-ear cress).